The chain runs to 67 residues: Conotoxin Cl6.7 (67 aa).

Positions 1–24 (MKVTAVLMVAVLVLTACQLTTANT) are cleaved as a signal peptide. A propeptide spanning residues 25-39 (TDYVRRIPARKSTMS) is cleaved from the precursor. 3 cysteine pairs are disulfide-bonded: Cys43/Cys58, Cys50/Cys62, and Cys57/Cys66.

This sequence belongs to the conotoxin O1 superfamily. In terms of tissue distribution, expressed by the venom duct.

The protein localises to the secreted. This chain is Conotoxin Cl6.7, found in Californiconus californicus (California cone).